The following is an 80-amino-acid chain: Translation initiation factor IF-1 (80 aa).

Residues 6 to 80 (EKRKKEESDV…TSRGRIVYRK (75 aa)) form the S1-like domain.

It belongs to the IF-1 family. As to quaternary structure, component of the 30S ribosomal translation pre-initiation complex which assembles on the 30S ribosome in the order IF-2 and IF-3, IF-1 and N-formylmethionyl-tRNA(fMet); mRNA recruitment can occur at any time during PIC assembly.

It is found in the cytoplasm. Functionally, one of the essential components for the initiation of protein synthesis. Stabilizes the binding of IF-2 and IF-3 on the 30S subunit to which N-formylmethionyl-tRNA(fMet) subsequently binds. Helps modulate mRNA selection, yielding the 30S pre-initiation complex (PIC). Upon addition of the 50S ribosomal subunit IF-1, IF-2 and IF-3 are released leaving the mature 70S translation initiation complex. The polypeptide is Translation initiation factor IF-1 (Deinococcus geothermalis (strain DSM 11300 / CIP 105573 / AG-3a)).